The following is an 89-amino-acid chain: MVDRKAVIKNADMSDDMQQDAIDCATQALEKYNIEKDIAAYIKKEFDKKYNPTWHCIVGRNFGSYVTHETKHFIYFYLGQVAILLFKSG.

The protein belongs to the dynein light chain family. As to quaternary structure, interacts with mett-10; the interaction is direct, and is required for the nuclear localization of mett-10. Component of a dynein-regulating complex composed of at least bicd-1, dlc-1 and egal-1. Interacts with egal-1 and unc-83. Interacts with fbf-2. Broadly expressed in tissues including the intestine, body wall muscles, germs cells, oocytes, the rectal valve and cells in the head.

Its subcellular location is the cytoplasm. The protein resides in the cytoskeleton. It is found in the nucleus envelope. It localises to the cytoplasmic granule. Functionally, acts as a non-catalytic accessory component of a dynein complex. Part of a complex with bicd-1 and egal-1, which is recruited to the nuclear envelope by unc-83, where in turn, it recruits dynein to the nuclear surface and regulates nuclear migrations in hypodermal precursor cells. Probably within a dynein motor complex, plays a role in the cell fate specification of the germline and oogenesis. In particular, it inhibits germ cell proliferation. Regulates the function and localization of the RNA-binding protein fbf-2 in the germline. Plays a role in mitotic and meiotic processes. Involved in the pairing of homologous chromosomes. Independently of its dynein-mediated functions, plays a role in germ cell apoptosis. This Caenorhabditis elegans protein is Dynein light chain 1, cytoplasmic.